The following is a 256-amino-acid chain: MRKQIVELFLIILAVLFIREYIAQAYTIPSASMEPTLLVGDFILVNKLVYSLSEPMRGDMIVFKYPKNPDIDFIKRIIARGGDTVEFFPYYDEKNNVLIYKVAVNGKLYELTYEGEKNYSYDCYQYREKLYREDGEVIQHSVCFRNTLLKVPGMVYNAISSDLCLKYNEDGFCVKFVVPEGYYFVMGDNRDNSQDSRFWGFVPRENIEGKAFVIYYSGKVPSLTPEEANPLTAVRQIIYALLNPRPSRIGKPLIDK.

Residues Ser32 and Lys75 contribute to the active site.

The protein belongs to the peptidase S26 family.

The catalysed reaction is Cleavage of hydrophobic, N-terminal signal or leader sequences from secreted and periplasmic proteins.. This chain is Signal peptidase I (lepB), found in Aquifex aeolicus (strain VF5).